The following is a 562-amino-acid chain: NAD-dependent malic enzyme (562 aa).

Tyrosine 101 acts as the Proton donor in catalysis. Arginine 154 contributes to the NAD(+) binding site. The active-site Proton acceptor is the lysine 172. Residues glutamate 243, aspartate 244, and aspartate 267 each contribute to the a divalent metal cation site. 2 residues coordinate NAD(+): aspartate 267 and asparagine 415.

This sequence belongs to the malic enzymes family. Homotetramer. The cofactor is Mg(2+). Requires Mn(2+) as cofactor.

It carries out the reaction (S)-malate + NAD(+) = pyruvate + CO2 + NADH. The catalysed reaction is oxaloacetate + H(+) = pyruvate + CO2. The sequence is that of NAD-dependent malic enzyme from Vibrio parahaemolyticus serotype O3:K6 (strain RIMD 2210633).